The chain runs to 312 residues: DNA-directed RNA polymerase subunit alpha (312 aa).

Residues 1-226 (MIEFEKPNIT…EHFKVFMSTD (226 aa)) form an alpha N-terminal domain (alpha-NTD) region. The tract at residues 243 to 312 (NEKKLEMTIE…ELGLSLRQDD (70 aa)) is alpha C-terminal domain (alpha-CTD).

This sequence belongs to the RNA polymerase alpha chain family. As to quaternary structure, homodimer. The RNAP catalytic core consists of 2 alpha, 1 beta, 1 beta' and 1 omega subunit. When a sigma factor is associated with the core the holoenzyme is formed, which can initiate transcription.

It catalyses the reaction RNA(n) + a ribonucleoside 5'-triphosphate = RNA(n+1) + diphosphate. Functionally, DNA-dependent RNA polymerase catalyzes the transcription of DNA into RNA using the four ribonucleoside triphosphates as substrates. The polypeptide is DNA-directed RNA polymerase subunit alpha (Lactobacillus gasseri (strain ATCC 33323 / DSM 20243 / BCRC 14619 / CIP 102991 / JCM 1131 / KCTC 3163 / NCIMB 11718 / NCTC 13722 / AM63)).